The sequence spans 486 residues: Hexosaminidase D (486 aa).

Glutamate 149 functions as the Proton donor in the catalytic mechanism.

This sequence belongs to the glycosyl hydrolase 20 family. In terms of assembly, homodimer; disulfide-linked. Expressed in synovial fibroblasts and synovial membranes.

It localises to the cytoplasm. The protein localises to the nucleus. The protein resides in the extracellular vesicle. It carries out the reaction Hydrolysis of terminal non-reducing N-acetyl-D-hexosamine residues in N-acetyl-beta-D-hexosaminides.. Inhibited by O-(2-acetamido-2-deoxy-D-glucopyranosylidene)amino N-phenylcarbamate (PUGNAc). Inhibited by galacto-NAG-thiazoline. Its function is as follows. Has hexosaminidase activity. Responsible for the cleavage of the monosaccharides N-acetylglucosamine (GlcNAc) and N-acetylgalactosamine (GalNAc) from cellular substrates. Has a preference for galactosaminide over glucosaminide substrates. The polypeptide is Hexosaminidase D (Homo sapiens (Human)).